Consider the following 353-residue polypeptide: Photosystem II D2 protein (353 aa).

T2 bears the N-acetylthreonine mark. Phosphothreonine is present on T2. The helical transmembrane segment at 41 to 61 threads the bilayer; the sequence is CAYFALGGWFTGTTFVTSWYT. Residue H118 participates in chlorophyll a binding. A helical membrane pass occupies residues 125-141; sequence GFMLRQFELARSVQLRP. Positions 130 and 143 each coordinate pheophytin a. Residues 153-166 form a helical membrane-spanning segment; it reads VFVSVFLIYPLGQS. H198 contributes to the chlorophyll a binding site. Residues 208-228 form a helical membrane-spanning segment; the sequence is AALLCAIHGATVENTLFEDGD. H215 and F262 together coordinate a plastoquinone. H215 contributes to the Fe cation binding site. H269 contributes to the Fe cation binding site. Residues 279–295 traverse the membrane as a helical segment; that stretch reads GLWMSALGVVGLALNLR.

Belongs to the reaction center PufL/M/PsbA/D family. In terms of assembly, PSII is composed of 1 copy each of membrane proteins PsbA, PsbB, PsbC, PsbD, PsbE, PsbF, PsbH, PsbI, PsbJ, PsbK, PsbL, PsbM, PsbT, PsbX, PsbY, PsbZ, Psb30/Ycf12, at least 3 peripheral proteins of the oxygen-evolving complex and a large number of cofactors. It forms dimeric complexes. It depends on The D1/D2 heterodimer binds P680, chlorophylls that are the primary electron donor of PSII, and subsequent electron acceptors. It shares a non-heme iron and each subunit binds pheophytin, quinone, additional chlorophylls, carotenoids and lipids. There is also a Cl(-1) ion associated with D1 and D2, which is required for oxygen evolution. The PSII complex binds additional chlorophylls, carotenoids and specific lipids. as a cofactor.

It is found in the plastid. The protein resides in the chloroplast thylakoid membrane. The enzyme catalyses 2 a plastoquinone + 4 hnu + 2 H2O = 2 a plastoquinol + O2. Its function is as follows. Photosystem II (PSII) is a light-driven water:plastoquinone oxidoreductase that uses light energy to abstract electrons from H(2)O, generating O(2) and a proton gradient subsequently used for ATP formation. It consists of a core antenna complex that captures photons, and an electron transfer chain that converts photonic excitation into a charge separation. The D1/D2 (PsbA/PsbD) reaction center heterodimer binds P680, the primary electron donor of PSII as well as several subsequent electron acceptors. D2 is needed for assembly of a stable PSII complex. The sequence is that of Photosystem II D2 protein from Populus trichocarpa (Western balsam poplar).